We begin with the raw amino-acid sequence, 117 residues long: Large ribosomal subunit protein bL20c (117 aa).

This sequence belongs to the bacterial ribosomal protein bL20 family.

The protein localises to the plastid. Its subcellular location is the chloroplast. In terms of biological role, binds directly to 23S ribosomal RNA and is necessary for the in vitro assembly process of the 50S ribosomal subunit. It is not involved in the protein synthesizing functions of that subunit. This is Large ribosomal subunit protein bL20c from Acorus gramineus (Dwarf sweet flag).